A 340-amino-acid chain; its full sequence is Methionine import ATP-binding protein MetN 1 (340 aa).

An ABC transporter domain is found at 2–242 (IRLENVSVDF…PQHAYTKQLV (241 aa)). 39–46 (GTSGAGKS) lines the ATP pocket.

Belongs to the ABC transporter superfamily. Methionine importer (TC 3.A.1.24) family. As to quaternary structure, the complex is composed of two ATP-binding proteins (MetN), two transmembrane proteins (MetI) and a solute-binding protein (MetQ).

It localises to the cell inner membrane. It carries out the reaction L-methionine(out) + ATP + H2O = L-methionine(in) + ADP + phosphate + H(+). The enzyme catalyses D-methionine(out) + ATP + H2O = D-methionine(in) + ADP + phosphate + H(+). Functionally, part of the ABC transporter complex MetNIQ involved in methionine import. Responsible for energy coupling to the transport system. The chain is Methionine import ATP-binding protein MetN 1 from Pectobacterium atrosepticum (strain SCRI 1043 / ATCC BAA-672) (Erwinia carotovora subsp. atroseptica).